Reading from the N-terminus, the 70-residue chain is Mu-conotoxin-like Am3.4 (70 aa).

The signal sequence occupies residues 1-20 (MMYKLGVLLIICLLLFPLTA). A propeptide spanning residues 21 to 53 (VPQDGDQPADRPAERMQDDISFEHDRFFDPVKR) is cleaved from the precursor. Intrachain disulfides connect C54-C69, C55-C65, and C61-C68. 4-hydroxyproline; partial; in major form is present on P67. Residue C69 is modified to Cysteine amide.

Belongs to the conotoxin M superfamily. Post-translationally, contains 3 disulfide bonds. Expressed by the venom duct.

Its subcellular location is the secreted. In terms of biological role, mu-conotoxins block voltage-gated sodium channels (Nav). The sequence is that of Mu-conotoxin-like Am3.4 from Conus amadis (Amadis cone).